The following is a 204-amino-acid chain: Putative F-box protein L168 (204 aa).

Residues 1–46 (MNLCDLFDEIIIGIIDELSDRDKIKFMTTCSRFYYFIDKTKYFDIY) enclose the F-box domain. The tract at residues 161–184 (NETNKITNNHTNKKINNNKKHQNN) is disordered. Residues 171 to 183 (TNKKINNNKKHQN) show a composition bias toward basic residues.

The polypeptide is Putative F-box protein L168 (Acanthamoeba polyphaga (Amoeba)).